We begin with the raw amino-acid sequence, 195 residues long: Large ribosomal subunit protein bL25 (195 aa).

The protein belongs to the bacterial ribosomal protein bL25 family. CTC subfamily. Part of the 50S ribosomal subunit; part of the 5S rRNA/L5/L18/L25 subcomplex. Contacts the 5S rRNA. Binds to the 5S rRNA independently of L5 and L18.

Its function is as follows. This is one of the proteins that binds to the 5S RNA in the ribosome where it forms part of the central protuberance. The protein is Large ribosomal subunit protein bL25 of Geobacter metallireducens (strain ATCC 53774 / DSM 7210 / GS-15).